A 188-amino-acid chain; its full sequence is Elongation factor P (188 aa).

The protein belongs to the elongation factor P family.

It localises to the cytoplasm. It participates in protein biosynthesis; polypeptide chain elongation. Its function is as follows. Involved in peptide bond synthesis. Stimulates efficient translation and peptide-bond synthesis on native or reconstituted 70S ribosomes in vitro. Probably functions indirectly by altering the affinity of the ribosome for aminoacyl-tRNA, thus increasing their reactivity as acceptors for peptidyl transferase. The polypeptide is Elongation factor P (Malacoplasma penetrans (strain HF-2) (Mycoplasma penetrans)).